Reading from the N-terminus, the 141-residue chain is Lysozyme P (141 aa).

An N-terminal signal peptide occupies residues 1 to 18 (MKAFLVICALTLTAVATQ). The 122-residue stretch at 20-141 (RTMDRCSLAR…GSLPSINSCF (122 aa)) folds into the C-type lysozyme domain. Disulfide bonds link Cys25/Cys140, Cys46/Cys130, Cys81/Cys97, and Cys93/Cys111. Active-site residues include Glu51 and Asp69.

Belongs to the glycosyl hydrolase 22 family. In terms of tissue distribution, salivary gland.

The catalysed reaction is Hydrolysis of (1-&gt;4)-beta-linkages between N-acetylmuramic acid and N-acetyl-D-glucosamine residues in a peptidoglycan and between N-acetyl-D-glucosamine residues in chitodextrins.. Unlikely to play an active role in the humoral immune defense. May have a function in the digestion of bacteria in the food. The chain is Lysozyme P (LysP) from Drosophila melanogaster (Fruit fly).